Consider the following 153-residue polypeptide: NADPH-dependent 7-cyano-7-deazaguanine reductase (153 aa).

Positions 1–26 (MVKIHDGASQLGANVAAPRSPEEATL) are disordered. Cysteine 51 functions as the Thioimide intermediate in the catalytic mechanism. Aspartate 58 serves as the catalytic Proton donor. Residues 73 to 75 (VES) and 92 to 93 (HE) each bind substrate.

Belongs to the GTP cyclohydrolase I family. QueF type 1 subfamily.

It is found in the cytoplasm. It catalyses the reaction 7-aminomethyl-7-carbaguanine + 2 NADP(+) = 7-cyano-7-deazaguanine + 2 NADPH + 3 H(+). Its pathway is tRNA modification; tRNA-queuosine biosynthesis. Its function is as follows. Catalyzes the NADPH-dependent reduction of 7-cyano-7-deazaguanine (preQ0) to 7-aminomethyl-7-deazaguanine (preQ1). The chain is NADPH-dependent 7-cyano-7-deazaguanine reductase from Methylocella silvestris (strain DSM 15510 / CIP 108128 / LMG 27833 / NCIMB 13906 / BL2).